The primary structure comprises 178 residues: ATP-dependent protease subunit HslV (178 aa).

T2 is a catalytic residue. Na(+) is bound by residues S159, C162, and T165.

This sequence belongs to the peptidase T1B family. HslV subfamily. As to quaternary structure, a double ring-shaped homohexamer of HslV is capped on each side by a ring-shaped HslU homohexamer. The assembly of the HslU/HslV complex is dependent on binding of ATP.

The protein resides in the cytoplasm. The catalysed reaction is ATP-dependent cleavage of peptide bonds with broad specificity.. Allosterically activated by HslU binding. Protease subunit of a proteasome-like degradation complex believed to be a general protein degrading machinery. The protein is ATP-dependent protease subunit HslV of Buchnera aphidicola subsp. Cinara cedri (strain Cc).